We begin with the raw amino-acid sequence, 156 residues long: Ribosome maturation factor RimP (156 aa).

It belongs to the RimP family.

It localises to the cytoplasm. Its function is as follows. Required for maturation of 30S ribosomal subunits. In Bacillus cytotoxicus (strain DSM 22905 / CIP 110041 / 391-98 / NVH 391-98), this protein is Ribosome maturation factor RimP.